Here is a 118-residue protein sequence, read N- to C-terminus: MAKHNETGTQAEILAEQHLVSQGLTPLARNYHCKGGEIDLIMQQQRALVFVEVRFRKSAAFGSAAASVTRSKQQKIVTAAQHFLMDNSKLANLPCRFDVVAITAGQIEWIENAFTLNE.

This sequence belongs to the UPF0102 family.

The chain is UPF0102 protein Sde_3146 from Saccharophagus degradans (strain 2-40 / ATCC 43961 / DSM 17024).